We begin with the raw amino-acid sequence, 291 residues long: T-cell leukemia homeobox protein 3 (291 aa).

The segment at 1–51 (MEAPASAQTPHPHEPISFGIDQILNSPDQDSAPAPRGPDGASYLGGPPGGR) is disordered. The segment at residues 166–225 (RKKPRTSFSRVQICELEKRFHRQKYLASAERAALAKSLKMTDAQVKTWFQNRRTKWRRQT) is a DNA-binding region (homeobox).

The protein localises to the nucleus. In Mus musculus (Mouse), this protein is T-cell leukemia homeobox protein 3 (Tlx3).